Reading from the N-terminus, the 229-residue chain is AA9 family lytic polysaccharide monooxygenase E (229 aa).

Positions 1–19 (MRSSDITFVLLSVVATVRS) are cleaved as a signal peptide. H20 is a Cu(2+) binding site. A disulfide bridge connects residues C57 and C178. N76 carries N-linked (GlcNAc...) asparagine glycosylation. H99 contacts Cu(2+). O2 contacts are provided by H164 and Q173. Y175 serves as a coordination point for Cu(2+). The N-linked (GlcNAc...) asparagine glycan is linked to N217.

It belongs to the polysaccharide monooxygenase AA9 family. Cu(2+) is required as a cofactor.

The protein localises to the secreted. The catalysed reaction is [(1-&gt;4)-beta-D-glucosyl]n+m + reduced acceptor + O2 = 4-dehydro-beta-D-glucosyl-[(1-&gt;4)-beta-D-glucosyl]n-1 + [(1-&gt;4)-beta-D-glucosyl]m + acceptor + H2O.. In terms of biological role, lytic polysaccharide monooxygenase (LPMO) that depolymerizes crystalline and amorphous polysaccharides via the oxidation of scissile alpha- or beta-(1-4)-glycosidic bonds, yielding C1 and C4 oxidation products. Catalysis by LPMOs requires the reduction of the active-site copper from Cu(II) to Cu(I) by a reducing agent and H(2)O(2) or O(2) as a cosubstrate. The polypeptide is AA9 family lytic polysaccharide monooxygenase E (Botryotinia fuckeliana (strain B05.10) (Noble rot fungus)).